Reading from the N-terminus, the 348-residue chain is N-formyl peptide receptor 2 (348 aa).

Asn-1 carries an N-linked (GlcNAc...) asparagine glycan. Residues 1 to 24 (NFSTPLSEYEEVSYESAGYTVLQI) are Extracellular-facing. A helical transmembrane segment spans residues 25-47 (LPLVVLGVTFVLGVLGNGLVIWV). The Cytoplasmic segment spans residues 48–58 (AGFRMTRTVTT). A helical membrane pass occupies residues 59–80 (ICYLNLALADFSFTATLPFLIV). Topologically, residues 81–97 (SMAMGEKWPFGWFLCKL) are extracellular. The cysteines at positions 95 and 173 are disulfide-linked. The helical transmembrane segment at 98-118 (IHIVVDINLFGSVFLIGFIAL) threads the bilayer. At 119 to 137 (DRCICVLHPVWAQNHRTVS) the chain is on the cytoplasmic side. The chain crosses the membrane as a helical span at residues 138–159 (LAMKVIVGPWILALVLTLPVFL). The Extracellular segment spans residues 160–202 (FLTTVTIPNGDTYCTFNFASWGGTPEKRLKVAITMLTARGIIR). Residues 203–223 (FVIGFSMPMSIVATCYGLIAA) form a helical membrane-spanning segment. Topologically, residues 224–239 (KIHKKGMIKSSRPLRV) are cytoplasmic. A helical transmembrane segment spans residues 240–263 (LTAVVASFFICWFPFQLVALLSTV). Over 264–283 (WLKEILVDGKYKIINILVNP) the chain is Extracellular. A helical transmembrane segment spans residues 284–303 (TSSLAFFNSCLNPMLYVFVG). Topologically, residues 304–348 (QDFRERLIHSLPTSLERALSEDSAPTNDTAASCASPPAETELQAM) are cytoplasmic. Positions 322-348 (LSEDSAPTNDTAASCASPPAETELQAM) are disordered. The span at 326–335 (SAPTNDTAAS) shows a compositional bias: polar residues.

This sequence belongs to the G-protein coupled receptor 1 family. Interacts with APP; the interaction takes place at the cell surface and the complex is then rapidly internalized.

The protein localises to the cell membrane. Its function is as follows. Low affinity receptor for N-formyl-methionyl peptides, which are powerful neutrophil chemotactic factors. Binding of FMLP to the receptor causes activation of neutrophils. This response is mediated via a G-protein that activates a phosphatidylinositol-calcium second messenger system. Receptor for the chemokine-like protein FAM19A5, mediating FAM19A5-stimulated macrophage chemotaxis and the inhibitory effect on TNFSF11/RANKL-induced osteoclast differentiation. This chain is N-formyl peptide receptor 2 (FPR2), found in Macaca mulatta (Rhesus macaque).